Reading from the N-terminus, the 526-residue chain is Microphthalmia-associated transcription factor (526 aa).

The interval 1-54 (MQSESGIVPDFEVGEEFHEEPKTYYELKSQPLKSSSSAEHPGASKPPISSSSMT) is disordered. Ser5 is subject to Phosphoserine; by MTOR. Basic and acidic residues predominate over residues 15 to 25 (EEFHEEPKTYY). A compositionally biased stretch (low complexity) spans 41–54 (PGASKPPISSSSMT). Ser180 is modified (phosphoserine; by MAPK). Positions 224–295 (DDVIDDIISL…PNIKRELTAC (72 aa)) are transactivation. At Ser280 the chain carries Phosphoserine; by MARK3. A Glycyl lysine isopeptide (Lys-Gly) (interchain with G-Cter in SUMO) cross-link involves residue Lys289. A bHLH domain is found at 311 to 364 (QKKDNHNLIERRRRFNINDRIKELGTLIPKSNDPDMRWNKGTILKASVDYIRKL). The stretch at 355–402 (KASVDYIRKLQREQQRAKELENRQKKLEHANRHLLLRIQELEMQARAH) forms a coiled coil. The tract at residues 374–395 (LENRQKKLEHANRHLLLRIQEL) is leucine-zipper. The segment at 401–431 (AHGLSLIPSTGLCSPDLVNRIIKQEPVLENC) is DNA-binding regulation. Ser405 bears the Phosphoserine; by GSK3 mark. At Ser414 the chain carries Phosphoserine. Lys423 participates in a covalent cross-link: Glycyl lysine isopeptide (Lys-Gly) (interchain with G-Cter in SUMO). A Phosphoserine modification is found at Ser491. The tract at residues 496 to 526 (TDPLLSSVSPGASKTSSRRSSMSMEETEHTC) is disordered. The segment covering 499–509 (LLSSVSPGASK) has biased composition (polar residues). Phosphoserine; by RPS6KA1 is present on Ser516.

Belongs to the MiT/TFE family. Homodimer or heterodimer; dimerization is mediated via the coiled coil region. Efficient DNA binding requires dimerization with another bHLH protein. Binds DNA in the form of homodimer or heterodimer with either TFE3, TFEB or TFEC. Interacts with small GTPases Rag (RagA/RRAGA, RagB/RRAGB, RagC/RRAGC and/or RagD/RRAGD); promoting its recruitment to lysosomal membrane in the presence of nutrients. Interacts with KARS1. Identified in a complex with HINT1 and CTNNB1. Interacts with VSX2. When nutrients are present, phosphorylation by MTOR at Ser-5 via non-canonical mTORC1 pathway promotes ubiquitination by the SCF(BTRC) complex, followed by degradation. Phosphorylation at Ser-405 significantly enhances the ability to bind the tyrosinase promoter. Phosphorylation by MARK3/cTAK1 at Ser-280 promotes association with 14-3-3/YWHA adapters and retention in the cytosol. Phosphorylated at Ser-180 and Ser-516 following KIT signaling, triggering a short live activation: Phosphorylation at Ser-180 and Ser-516 by MAPK and RPS6KA1, respectively, activate the transcription factor activity but also promote ubiquitination and subsequent degradation by the proteasome. Phosphorylated in response to blue light (415nm). In terms of processing, ubiquitinated by the SCF(BTRC) and SCF(FBXW11) complexes following phosphorylation ar Ser-5 by MTOR, leading to its degradation by the proteasome. Ubiquitinated following phosphorylation at Ser-180, leading to subsequent degradation by the proteasome. Deubiquitinated by USP13, preventing its degradation. As to expression, expressed in melanocytes (at protein level). Expressed in the retinal pigment epithelium, brain, and placenta. Expressed in the kidney. In terms of tissue distribution, expressed in the kidney and retinal pigment epithelium. As to expression, expressed in the kidney. Expressed in melanocytes.

It is found in the nucleus. Its subcellular location is the cytoplasm. It localises to the lysosome membrane. Its function is as follows. Transcription factor that acts as a master regulator of melanocyte survival and differentiation as well as melanosome biogenesis. Binds to M-boxes (5'-TCATGTG-3') and symmetrical DNA sequences (E-boxes) (5'-CACGTG-3') found in the promoter of pigmentation genes, such as tyrosinase (TYR). Involved in the cellular response to amino acid availability by acting downstream of MTOR: in the presence of nutrients, MITF phosphorylation by MTOR promotes its inactivation. Upon starvation or lysosomal stress, inhibition of MTOR induces MITF dephosphorylation, resulting in transcription factor activity. Plays an important role in melanocyte development by regulating the expression of tyrosinase (TYR) and tyrosinase-related protein 1 (TYRP1). Plays a critical role in the differentiation of various cell types, such as neural crest-derived melanocytes, mast cells, osteoclasts and optic cup-derived retinal pigment epithelium. In Homo sapiens (Human), this protein is Microphthalmia-associated transcription factor.